The following is a 20-amino-acid chain: VVGGKPAKLGAWPWMVALGF.

This sequence belongs to the peptidase S1 family. Contains 3 disulfide bonds. In terms of processing, N-glycosylated. Expressed by the venom duct.

The protein resides in the secreted. This is Venom protease from Bombus terrestris (Buff-tailed bumblebee).